The chain runs to 484 residues: Ribosome biogenesis protein NOP53 (484 aa).

Disordered stretches follow at residues 1-51 (MAAG…WRRL) and 304-356 (ESDG…AARK). At Ala2 the chain carries N-acetylalanine. A Phosphoserine modification is found at Ser29. A compositionally biased stretch (basic residues) spans 35–49 (RRRRRGPRNKKRGWR). Residues 148-437 (KEELWEKLAK…SELSGSLRTL (290 aa)) form a mediates interaction with CDKN2A/isoform tumor suppressor ARF region. Ser305 carries the phosphoserine modification. Residues 336–348 (PEKRMEKKTEQQR) are compositionally biased toward basic and acidic residues. Residues 348 to 392 (RRREKAARKLRVQQAALRAARLQHQELFRLRGIKAQVARRLAELA) are mediates interaction with human herpesvirus 8 protein ORF16. 2 nucleolar localization signal regions span residues 353 to 401 (AARK…RRIR) and 402 to 484 (RLAE…EIQL).

Belongs to the NOP53 family. As to quaternary structure, homooligomer. Interacts with PTEN; regulates PTEN phosphorylation and increases its stability. Interacts with RPL11; retains RPL11 into the nucleolus. Interacts with CDKN2A/isoform tumor suppressor ARF; the interaction is direct and promotes ARF nucleoplasmic relocalization and ubiquitin-mediated proteasomal degradation. Interacts with NPM1; the interaction is direct and competitive with MYC. Interacts with NF2 (via FERM domain); the interaction is direct. Interacts with p53/TP53 (via the oligomerization region); the interaction is direct and may prevent the MDM2-mediated proteasomal degradation of p53/TP53. Interacts with RIGI; may regulate RIGI through USP15-mediated 'Lys-63'-linked deubiquitination. Interacts with UBTF. Ubiquitin-mediated proteasomal degradation is regulated by c-JUN. It is associated with relocalization to the nucleoplasm and decreased homooligomerization. Post-translationally, phosphorylated upon DNA damage probably by ATM and DNA-PK; may regulate NOP53 degradation.

Its subcellular location is the nucleus. It localises to the nucleolus. It is found in the nucleoplasm. Functionally, nucleolar protein which is involved in the integration of the 5S RNP into the ribosomal large subunit during ribosome biogenesis. In ribosome biogenesis, may also play a role in rRNA transcription. Also functions as a nucleolar sensor that regulates the activation of p53/TP53 in response to ribosome biogenesis perturbation, DNA damage and other stress conditions. DNA damage or perturbation of ribosome biogenesis disrupt the interaction between NOP53 and RPL11 allowing RPL11 transport to the nucleoplasm where it can inhibit MDM2 and allow p53/TP53 activation. It may also positively regulate the function of p53/TP53 in cell cycle arrest and apoptosis through direct interaction, preventing its MDM2-dependent ubiquitin-mediated proteasomal degradation. Originally identified as a tumor suppressor, it may also play a role in cell proliferation and apoptosis by positively regulating the stability of PTEN, thereby antagonizing the PI3K-AKT/PKB signaling pathway. May also inhibit cell proliferation and increase apoptosis through its interaction with NF2. May negatively regulate NPM1 by regulating its nucleoplasmic localization, oligomerization and ubiquitin-mediated proteasomal degradation. Thereby, may prevent NPM1 interaction with MYC and negatively regulate transcription mediated by the MYC-NPM1 complex. May also regulate cellular aerobic respiration. In the cellular response to viral infection, may play a role in the attenuation of interferon-beta through the inhibition of RIGI. This is Ribosome biogenesis protein NOP53 from Mus musculus (Mouse).